Consider the following 254-residue polypeptide: Putative biopolymer transport protein ExbB-like 1 (254 aa).

3 helical membrane-spanning segments follow: residues 39-59 (GGVVMFPLLLLSILALTTAFE), 141-161 (LETIIALAPLLGLLGTVTGLI), and 185-205 (IGEALITTAAGMMVAIFALLV).

This sequence belongs to the ExbB/TolQ family.

The protein localises to the cell inner membrane. In terms of biological role, involved in the TonB-dependent energy-dependent transport of various receptor-bound substrates. Protects ExbD from proteolytic degradation and functionally stabilizes TonB. The protein is Putative biopolymer transport protein ExbB-like 1 of Synechocystis sp. (strain ATCC 27184 / PCC 6803 / Kazusa).